The primary structure comprises 336 residues: Holliday junction branch migration complex subunit RuvB (336 aa).

A large ATPase domain (RuvB-L) region spans residues 4 to 184; the sequence is ADRLVSADSS…FGIVQRLEFY (181 aa). Residues isoleucine 23, arginine 24, glycine 65, lysine 68, threonine 69, threonine 70, 131 to 133, arginine 174, tyrosine 184, and arginine 221 contribute to the ATP site; that span reads EDY. Threonine 69 contacts Mg(2+). Residues 185–255 form a small ATPAse domain (RuvB-S) region; the sequence is QIPDLQHIVS…IAAQALDMLN (71 aa). The segment at 258–336 is head domain (RuvB-H); the sequence is AEGFDYMDRK…HFGITPPEMP (79 aa). DNA is bound by residues arginine 294, arginine 313, and arginine 318.

This sequence belongs to the RuvB family. Homohexamer. Forms an RuvA(8)-RuvB(12)-Holliday junction (HJ) complex. HJ DNA is sandwiched between 2 RuvA tetramers; dsDNA enters through RuvA and exits via RuvB. An RuvB hexamer assembles on each DNA strand where it exits the tetramer. Each RuvB hexamer is contacted by two RuvA subunits (via domain III) on 2 adjacent RuvB subunits; this complex drives branch migration. In the full resolvosome a probable DNA-RuvA(4)-RuvB(12)-RuvC(2) complex forms which resolves the HJ.

Its subcellular location is the cytoplasm. It carries out the reaction ATP + H2O = ADP + phosphate + H(+). The RuvA-RuvB-RuvC complex processes Holliday junction (HJ) DNA during genetic recombination and DNA repair, while the RuvA-RuvB complex plays an important role in the rescue of blocked DNA replication forks via replication fork reversal (RFR). RuvA specifically binds to HJ cruciform DNA, conferring on it an open structure. The RuvB hexamer acts as an ATP-dependent pump, pulling dsDNA into and through the RuvAB complex. RuvB forms 2 homohexamers on either side of HJ DNA bound by 1 or 2 RuvA tetramers; 4 subunits per hexamer contact DNA at a time. Coordinated motions by a converter formed by DNA-disengaged RuvB subunits stimulates ATP hydrolysis and nucleotide exchange. Immobilization of the converter enables RuvB to convert the ATP-contained energy into a lever motion, pulling 2 nucleotides of DNA out of the RuvA tetramer per ATP hydrolyzed, thus driving DNA branch migration. The RuvB motors rotate together with the DNA substrate, which together with the progressing nucleotide cycle form the mechanistic basis for DNA recombination by continuous HJ branch migration. Branch migration allows RuvC to scan DNA until it finds its consensus sequence, where it cleaves and resolves cruciform DNA. The chain is Holliday junction branch migration complex subunit RuvB from Klebsiella pneumoniae subsp. pneumoniae (strain ATCC 700721 / MGH 78578).